The following is a 387-amino-acid chain: 3-ketoacyl-CoA thiolase (387 aa).

The Acyl-thioester intermediate role is filled by Cys91. Catalysis depends on proton acceptor residues His343 and Cys373.

This sequence belongs to the thiolase-like superfamily. Thiolase family. Heterotetramer of two alpha chains (FadB) and two beta chains (FadA).

The protein resides in the cytoplasm. The enzyme catalyses an acyl-CoA + acetyl-CoA = a 3-oxoacyl-CoA + CoA. The protein operates within lipid metabolism; fatty acid beta-oxidation. Its function is as follows. Catalyzes the final step of fatty acid oxidation in which acetyl-CoA is released and the CoA ester of a fatty acid two carbons shorter is formed. The chain is 3-ketoacyl-CoA thiolase from Cronobacter sakazakii (strain ATCC BAA-894) (Enterobacter sakazakii).